The sequence spans 70 residues: Ribosome modulation factor (70 aa).

It belongs to the ribosome modulation factor family.

It localises to the cytoplasm. Functionally, during stationary phase, converts 70S ribosomes to an inactive dimeric form (100S ribosomes). The protein is Ribosome modulation factor of Marinobacter adhaerens (strain DSM 23420 / HP15).